The following is a 356-amino-acid chain: Heparan sulfate 2-O-sulfotransferase 1 (356 aa).

The Cytoplasmic portion of the chain corresponds to 1–11; the sequence is MGLLRIMMPPK. Residues 12–28 traverse the membrane as a helical; Signal-anchor for type II membrane protein segment; the sequence is LQLLAVLTFGVLMLFLE. The stretch at 24 to 51 forms a coiled coil; that stretch reads MLFLENQIQNLEESREKLERAIARHEVR. Over 29–356 the chain is Lumenal; it reads NQIQNLEESR…FYEKIYPKSN (328 aa). Positions 83, 84, 85, 86, 87, and 88 each coordinate adenosine 3',5'-bisphosphate. 2 N-linked (GlcNAc...) asparagine glycosylation sites follow: Asn108 and Asn127. Active-site residues include His140 and His142. Adenosine 3',5'-bisphosphate contacts are provided by Arg164 and Ser172. Intrachain disulfides connect Cys201-Cys209 and Cys222-Cys228. Tyr279, Ser285, Thr290, and Lys293 together coordinate adenosine 3',5'-bisphosphate.

Belongs to the sulfotransferase 3 family. Homotrimer.

It is found in the golgi apparatus membrane. Functionally, catalyzes the transfer of a sulfo group from 3'-phospho-5'-adenylyl sulfate (PAPS) to the 2-OH position of iduronic acid (IdoA) or glucuronic acid (GlcA) within the heparan sulfate (HS) chain and participates in HS biosynthesis. In Xenopus laevis (African clawed frog), this protein is Heparan sulfate 2-O-sulfotransferase 1.